The chain runs to 110 residues: UPF0060 membrane protein Bcep1808_1236 (110 aa).

A run of 3 helical transmembrane segments spans residues Ala-9–Leu-29, Pro-34–Leu-54, and Tyr-66–Leu-86.

Belongs to the UPF0060 family.

The protein localises to the cell inner membrane. This is UPF0060 membrane protein Bcep1808_1236 from Burkholderia vietnamiensis (strain G4 / LMG 22486) (Burkholderia cepacia (strain R1808)).